The following is a 142-amino-acid chain: MSLLPVPYTEAASLSTGSTVTIKGRPLACFLNEPYLQVDFHTEMKEESDIVFHFQVCFGRRVVMNSREYGAWKQQVESKNMPFQDGQEFELSISVLPDKYQVMVNGQSSYTFDHRIKPEAVKMVQVWRDISLTKFNVSYLKR.

Position 2 is an N-acetylserine (S2). Residues 6–138 form the Galectin domain; that stretch reads VPYTEAASLS…DISLTKFNVS (133 aa).

As to quaternary structure, interacts with CEL. As to expression, expressed abundantly in the bone marrow. Expressed exclusively by eosinophils and basophils. Not detected in monocytes and neutrophils. Expressed in CD25-positive regulatory T-cells (Treg) (at protein level). Found in intestinal tissue from patients with Celiac disease, expression is directly related to the histological grade of mucosal damage and to the number of eosinophils found in the duodenal lesion (at protein level). Found in sputum of patients with eosinophilic inflammatory diseases such as asthma (at protein level).

The protein localises to the cytoplasm. It localises to the cytosol. It is found in the cytoplasmic granule. In terms of biological role, regulates immune responses through the recognition of cell-surface glycans. Essential for the anergy and suppressive function of CD25-positive regulatory T-cells (Treg). This Homo sapiens (Human) protein is Galectin-10 (CLC).